We begin with the raw amino-acid sequence, 120 residues long: Large ribosomal subunit protein uL18 (120 aa).

Belongs to the universal ribosomal protein uL18 family. In terms of assembly, part of the 50S ribosomal subunit; part of the 5S rRNA/L5/L18/L25 subcomplex. Contacts the 5S and 23S rRNAs.

This is one of the proteins that bind and probably mediate the attachment of the 5S RNA into the large ribosomal subunit, where it forms part of the central protuberance. The chain is Large ribosomal subunit protein uL18 from Maricaulis maris (strain MCS10) (Caulobacter maris).